A 922-amino-acid chain; its full sequence is Probable dipeptidyl-aminopeptidase B (922 aa).

The segment covering 1–16 (MATEKGHSRDDEERVP) has biased composition (basic and acidic residues). The disordered stretch occupies residues 1–21 (MATEKGHSRDDEERVPLTRGS). Over 1 to 99 (MATEKGHSRD…KPMHKSVKIA (99 aa)) the chain is Cytoplasmic. Residues 100-120 (LWSLLFLSLGGWSLAFVLFIF) traverse the membrane as a helical; Signal-anchor for type II membrane protein segment. The Vacuolar portion of the chain corresponds to 121–922 (RSHDTYQTPI…AGLYKFKHLC (802 aa)). N-linked (GlcNAc...) asparagine glycosylation is found at asparagine 135, asparagine 200, asparagine 351, and asparagine 574. Residue serine 756 is the Charge relay system of the active site. Asparagine 815 is a glycosylation site (N-linked (GlcNAc...) asparagine). Active-site charge relay system residues include aspartate 833 and histidine 866. N-linked (GlcNAc...) asparagine glycosylation occurs at asparagine 902.

This sequence belongs to the peptidase S9B family.

Its subcellular location is the vacuole membrane. It carries out the reaction Release of an N-terminal dipeptide, Xaa-Yaa-|-Zaa-, from a polypeptide, preferentially when Yaa is Pro, provided Zaa is neither Pro nor hydroxyproline.. Its function is as follows. Type IV dipeptidyl-peptidase which removes N-terminal dipeptides sequentially from polypeptides having unsubstituted N-termini provided that the penultimate residue is proline. This chain is Probable dipeptidyl-aminopeptidase B (DAPB), found in Ajellomyces capsulatus (strain NAm1 / WU24) (Darling's disease fungus).